The chain runs to 665 residues: Transketolase 1 (665 aa).

A substrate-binding site is contributed by His-26. Thiamine diphosphate is bound by residues His-66 and 114-116 (GPL). Asp-155 is a binding site for Mg(2+). Positions 156 and 185 each coordinate thiamine diphosphate. Mg(2+) contacts are provided by Asn-185 and Ile-187. Substrate contacts are provided by His-261, Arg-358, and Ser-385. His-261 lines the thiamine diphosphate pocket. Glu-412 serves as the catalytic Proton donor. Phe-438 is a binding site for thiamine diphosphate. Positions 462, 470, and 521 each coordinate substrate.

This sequence belongs to the transketolase family. Homodimer. Mg(2+) serves as cofactor. Requires Ca(2+) as cofactor. The cofactor is Mn(2+). It depends on Co(2+) as a cofactor. Thiamine diphosphate is required as a cofactor.

The enzyme catalyses D-sedoheptulose 7-phosphate + D-glyceraldehyde 3-phosphate = aldehydo-D-ribose 5-phosphate + D-xylulose 5-phosphate. Functionally, catalyzes the transfer of a two-carbon ketol group from a ketose donor to an aldose acceptor, via a covalent intermediate with the cofactor thiamine pyrophosphate. The chain is Transketolase 1 (tkt1) from Vibrio cholerae serotype O1 (strain ATCC 39315 / El Tor Inaba N16961).